The following is a 275-amino-acid chain: Large ribosomal subunit protein uL2 (275 aa).

Disordered regions lie at residues 36 to 55 (PKKRGSGRNNNGHITVRHKG) and 223 to 275 (VVMN…RHAR).

Belongs to the universal ribosomal protein uL2 family. As to quaternary structure, part of the 50S ribosomal subunit. Forms a bridge to the 30S subunit in the 70S ribosome.

Functionally, one of the primary rRNA binding proteins. Required for association of the 30S and 50S subunits to form the 70S ribosome, for tRNA binding and peptide bond formation. It has been suggested to have peptidyltransferase activity; this is somewhat controversial. Makes several contacts with the 16S rRNA in the 70S ribosome. The polypeptide is Large ribosomal subunit protein uL2 (Thiobacillus denitrificans (strain ATCC 25259 / T1)).